The primary structure comprises 105 residues: Resistin-like beta (105 aa).

The N-terminal stretch at 1 to 23 (MKPTLCFLFILVSLFPLIVPGNA) is a signal peptide. Intrachain disulfides connect Cys-49–Cys-102, Cys-61–Cys-101, Cys-70–Cys-87, Cys-72–Cys-89, and Cys-76–Cys-91.

The protein belongs to the resistin/FIZZ family. Homodimer; disulfide-linked. Heterodimer with RETNLG. In terms of tissue distribution, strongly expressed in colon, and at lower levels in ileum. In colon, found throughout the crypt and surface epithelium and in goblet cells (at protein level). Specific to the gastrointestinal tract; not detected in other tissues tested.

The protein resides in the secreted. In terms of biological role, probable hormone. The sequence is that of Resistin-like beta (Retnlb) from Mus musculus (Mouse).